The following is a 150-amino-acid chain: Avidin-related protein 1 (150 aa).

A signal peptide spans 1–24 (MVHATSPLLLLLLLSLALVAPGLS). An Avidin-like domain is found at 26-147 (RKCSLTGKWD…GNNDFTRQRT (122 aa)). Cys28 and Cys105 are oxidised to a cystine. Biotin is bound by residues Asn36 and Ser40. Asn54 carries an N-linked (GlcNAc...) asparagine glycan. The biotin site is built by Tyr57, Thr59, and Asp63. Asn67 and Asn93 each carry an N-linked (GlcNAc...) asparagine glycan. Ser95, Ser99, and Asn140 together coordinate biotin.

The protein belongs to the avidin/streptavidin family. As to quaternary structure, homotetramer. In terms of processing, glycosylated.

It localises to the secreted. In terms of biological role, forms a strong non-covalent specific complex with biotin. The sequence is that of Avidin-related protein 1 (AVR1) from Gallus gallus (Chicken).